The following is a 155-amino-acid chain: uncharacterized protein (155 aa).

2 disordered regions span residues 1–22 and 108–155; these read MSSQKGNVTRSRPQKHQNTFTF and PFNK…DTQA. N-acetylserine is present on serine 2. 3 positions are modified to phosphoserine: serine 136, serine 144, and serine 146. The segment covering 136–155 has biased composition (acidic residues); the sequence is SDEDLDAESDSEGEDEDTQA.

This is an uncharacterized protein from Rattus norvegicus (Rat).